We begin with the raw amino-acid sequence, 181 residues long: MIQTSETAQRYARALFELAQDKGDLATIHKDFRAFAALIKTSADLRKLLDSPAFSRDVKVSALAEIAKKAGYSPLFGKFLGTMATNGRANDILGAEFAFDQFYAKQRGVQRAIVRTAKEMTGAEKSRIESLLARVVGGDVELTSEVDPSLIGGIQLRLGSKLVDASVAKKLERMNTVMKGA.

The protein belongs to the ATPase delta chain family. F-type ATPases have 2 components, F(1) - the catalytic core - and F(0) - the membrane proton channel. F(1) has five subunits: alpha(3), beta(3), gamma(1), delta(1), epsilon(1). F(0) has three main subunits: a(1), b(2) and c(10-14). The alpha and beta chains form an alternating ring which encloses part of the gamma chain. F(1) is attached to F(0) by a central stalk formed by the gamma and epsilon chains, while a peripheral stalk is formed by the delta and b chains.

Its subcellular location is the cell inner membrane. F(1)F(0) ATP synthase produces ATP from ADP in the presence of a proton or sodium gradient. F-type ATPases consist of two structural domains, F(1) containing the extramembraneous catalytic core and F(0) containing the membrane proton channel, linked together by a central stalk and a peripheral stalk. During catalysis, ATP synthesis in the catalytic domain of F(1) is coupled via a rotary mechanism of the central stalk subunits to proton translocation. Functionally, this protein is part of the stalk that links CF(0) to CF(1). It either transmits conformational changes from CF(0) to CF(1) or is implicated in proton conduction. The polypeptide is ATP synthase subunit delta (Hyphomonas neptunium (strain ATCC 15444)).